The primary structure comprises 494 residues: Probable cytosol aminopeptidase (494 aa).

Positions 260 and 265 each coordinate Mn(2+). Residue K272 is part of the active site. Residues D283, D342, and E344 each contribute to the Mn(2+) site. The active site involves R346.

Belongs to the peptidase M17 family. It depends on Mn(2+) as a cofactor.

The protein localises to the cytoplasm. It catalyses the reaction Release of an N-terminal amino acid, Xaa-|-Yaa-, in which Xaa is preferably Leu, but may be other amino acids including Pro although not Arg or Lys, and Yaa may be Pro. Amino acid amides and methyl esters are also readily hydrolyzed, but rates on arylamides are exceedingly low.. It carries out the reaction Release of an N-terminal amino acid, preferentially leucine, but not glutamic or aspartic acids.. Presumably involved in the processing and regular turnover of intracellular proteins. Catalyzes the removal of unsubstituted N-terminal amino acids from various peptides. This is Probable cytosol aminopeptidase from Bacillus mycoides (strain KBAB4) (Bacillus weihenstephanensis).